The chain runs to 396 residues: S-adenosylmethionine synthase 1 (396 aa).

Position 13 (Glu13) interacts with Mg(2+). An ATP-binding site is contributed by His19. Glu47 lines the K(+) pocket. L-methionine is bound by residues Glu60 and Gln103. ATP-binding positions include 171-173, 239-242, Asp250, 256-257, Ala273, Lys277, and Lys281; these read DGK, SGRF, and RK. Asp250 contributes to the L-methionine binding site. Lys281 is a binding site for L-methionine.

The protein belongs to the AdoMet synthase family. In terms of assembly, homotetramer. Mn(2+) serves as cofactor. Requires Mg(2+) as cofactor. The cofactor is Co(2+). K(+) is required as a cofactor.

The protein resides in the cytoplasm. The enzyme catalyses L-methionine + ATP + H2O = S-adenosyl-L-methionine + phosphate + diphosphate. It functions in the pathway amino-acid biosynthesis; S-adenosyl-L-methionine biosynthesis; S-adenosyl-L-methionine from L-methionine: step 1/1. In terms of biological role, catalyzes the formation of S-adenosylmethionine from methionine and ATP. The reaction comprises two steps that are both catalyzed by the same enzyme: formation of S-adenosylmethionine (AdoMet) and triphosphate, and subsequent hydrolysis of the triphosphate. May be involved in the synthesis of betain in response to abiotic stress such as high salinity. The chain is S-adenosylmethionine synthase 1 (SAMS1) from Beta vulgaris (Sugar beet).